The chain runs to 431 residues: Protein SHQ1 homolog (431 aa).

The protein belongs to the SHQ1 family.

Required for the quantitative accumulation of H/ACA ribonucleoproteins (RNPs). The chain is Protein SHQ1 homolog from Caenorhabditis elegans.